A 235-amino-acid polypeptide reads, in one-letter code: 2-C-methyl-D-erythritol 4-phosphate cytidylyltransferase (235 aa).

Belongs to the IspD/TarI cytidylyltransferase family. IspD subfamily.

It catalyses the reaction 2-C-methyl-D-erythritol 4-phosphate + CTP + H(+) = 4-CDP-2-C-methyl-D-erythritol + diphosphate. It participates in isoprenoid biosynthesis; isopentenyl diphosphate biosynthesis via DXP pathway; isopentenyl diphosphate from 1-deoxy-D-xylulose 5-phosphate: step 2/6. Catalyzes the formation of 4-diphosphocytidyl-2-C-methyl-D-erythritol from CTP and 2-C-methyl-D-erythritol 4-phosphate (MEP). The sequence is that of 2-C-methyl-D-erythritol 4-phosphate cytidylyltransferase from Pseudomonas entomophila (strain L48).